We begin with the raw amino-acid sequence, 296 residues long: 4-amino-4-deoxyprephenate dehydrogenase (296 aa).

A Prephenate/arogenate dehydrogenase domain is found at Arg9–Cys288.

Belongs to the prephenate/arogenate dehydrogenase family.

It carries out the reaction 4-amino-4-deoxyprephenate + NAD(+) = 3-(4-aminophenyl)pyruvate + CO2 + NADH + H(+). It participates in antibiotic biosynthesis. Functionally, involved in pristinamycin I biosynthesis. Probably catalyzes the formation of 3-(4-aminophenyl)pyruvate from 4-amino-4-deoxyprephenate. In Streptomyces pristinaespiralis, this protein is 4-amino-4-deoxyprephenate dehydrogenase.